The sequence spans 304 residues: MARASSRNSSEEAWGSLQAPQQQQSPAASSLEGAIWRRAGTQTRALDTILYHPQQSHLLRELCPGVNTQPYLCETGHCCGETGCCTYYYELWWFWLLWTVLILFSCCCAFRHRRAKLRLQQQQRQREINLLAYHGACHGAGPVPTGSLLDLRLLSAFKPPAYEDVVHHPGTPPPPYTVGPGYPWTTSSECTRCSSESSCSAHLEGTNVEGVSSQQSALPHQEGEPRAGLSPVHIPPSCRYRRLTGDSGIELCPCPDSSEGEPLKEARASASQPDLEDHSPCALPPDSVSQVPPMGLASSCGDIP.

The tract at residues 1–26 (MARASSRNSSEEAWGSLQAPQQQQSP) is disordered. Short sequence motifs (PPxY motif) lie at residues 159-162 (PPAY) and 172-176 (PPPPY). 2 disordered regions span residues 206–235 (TNVE…VHIP) and 252–304 (CPCP…GDIP). Positions 209–218 (EGVSSQQSAL) are enriched in polar residues.

As to quaternary structure, binds to the WW domain of YAP1, WWP1 and WWP2. Interacts with WWOX. Interacts with NEDD4.

This is WW domain-binding protein 1 (Wbp1) from Mus musculus (Mouse).